The primary structure comprises 421 residues: Testin (421 aa).

A PET domain is found at 92 to 199; the sequence is MILTNPVPAK…GDVKLPSEMD (108 aa). The tract at residues 135-165 is disordered; that stretch reads QPVAGSEGAQYRKKQLAKQLPEHDQDPSKCH. Over residues 154-165 the composition is skewed to basic and acidic residues; that stretch reads LPEHDQDPSKCH. LIM zinc-binding domains lie at 234 to 297, 299 to 359, and 362 to 421; these read YSCY…CDSE, PRCA…NHAV, and QGCH…KMMS.

This sequence belongs to the prickle / espinas / testin family. Interacts via LIM domain 1 with ZYX. Interacts (via LIM domain 3) with ENAH and VASP. Interacts with ALKBH4, talin, actin, alpha-actinin, GRIP1 and PXN. Interacts (via LIM domain 2) with ACTL7A (via N-terminus). Heterodimer with ACTL7A; the heterodimer interacts with ENAH to form a heterotrimer.

It localises to the cytoplasm. The protein resides in the cell junction. Its subcellular location is the focal adhesion. Functionally, scaffold protein that may play a role in cell adhesion, cell spreading and in the reorganization of the actin cytoskeleton. Plays a role in the regulation of cell proliferation. May act as a tumor suppressor. This Dasypus novemcinctus (Nine-banded armadillo) protein is Testin (TES).